The chain runs to 111 residues: Natriuretic peptide TNP-b (111 aa).

A signal peptide spans 1–27; sequence MVGLSRLAGGGLLLLLLLALLPLALDG. A propeptide spanning residues 28 to 71 is cleaved from the precursor; it reads KPAPLPQALPEALAGGTTALRRDVTEEQQQQLVAEESSGPAAGR. Disordered regions lie at residues 51 to 77 and 92 to 111; these read VTEEQQQQLVAEESSGPAAGRSDPKIG and SGLGCNRPVQNRPKQIPGGS. Cys80 and Cys96 are joined by a disulfide. A propeptide spanning residues 107–111 is cleaved from the precursor; that stretch reads IPGGS.

Belongs to the natriuretic peptide family. Expressed by the venom gland.

The protein resides in the secreted. Its function is as follows. Snake venom natriuretic peptide that exhibits vasoactive and probable hypotensive activity. Is only weakly active on natriuretic peptide receptor-C (NPR3). This chain is Natriuretic peptide TNP-b, found in Oxyuranus scutellatus scutellatus (Australian taipan).